Consider the following 482-residue polypeptide: Ubiquitin carboxyl-terminal hydrolase MINDY-1 (482 aa).

The tract at residues 1–119 is disordered; sequence MEQPQAECPA…RPQQLPQSPR (119 aa). Basic and acidic residues predominate over residues 21-66; it reads ESEKHEALSGPEKHPQDKDGADAAPEKHPQDKDGADAHGEAGKQKS. The segment covering 82-94 has biased composition (pro residues); sequence CPPPEASSSPPGP. The span at 106 to 119 shows a compositional bias: polar residues; sequence EACSRPQQLPQSPR. A Phosphoserine modification is found at S117. C151 acts as the Nucleophile in catalysis. The Proton acceptor role is filled by H333. The interval 402–441 is ubiquitin-binding domain (UBD); it reads QVDQDYLIALSLQQQQQPQGMLGLSDLELAQQLQQEEYQQ. Residues 437–446 show a composition bias toward low complexity; that stretch reads EEYQQQQAVQ. The disordered stretch occupies residues 437–482; it reads EEYQQQQAVQPVRTRAPSSPGRGATSGRPAGERRQRSKTESDCVLL. S454 carries the phosphoserine modification. Over residues 466–482 the composition is skewed to basic and acidic residues; the sequence is AGERRQRSKTESDCVLL.

It belongs to the MINDY deubiquitinase family. FAM63 subfamily.

The enzyme catalyses Thiol-dependent hydrolysis of ester, thioester, amide, peptide and isopeptide bonds formed by the C-terminal Gly of ubiquitin (a 76-residue protein attached to proteins as an intracellular targeting signal).. Its function is as follows. Hydrolase that can specifically remove 'Lys-48'-linked conjugated ubiquitin from proteins. Has exodeubiquitinase activity and has a preference for long polyubiquitin chains. May play a regulatory role at the level of protein turnover. The chain is Ubiquitin carboxyl-terminal hydrolase MINDY-1 (Mindy1) from Rattus norvegicus (Rat).